The primary structure comprises 621 residues: MTLGLEQAEEQRLYQQTLLQDGLKDMLDHGKFLDCVVRVGEREFPCHRLVLAACSPYFRARFLAEPDSAGEVRLEEVSPDVVSQVLHYLYTSEIALDEASVQDLFAAAHRFQIPSIFTICVSFLQKRLCLANCLAVFRLGLLLDCARLAVAARDFICARFPLVARDNDFLGLSADELIAIISSDGLNVEKEEAVFEAVMRWASSGDAEAQAERQRALPTVFESVRCRLLPRAFLETRVERHPLVRSQPELLRKVQMVKDAHEGRLTTLRKKKKEKGEQTARAKEANQGTEDTKAEDDEERVLPGILNDTLRFGMFLQDLIFMISEEGAVAYDPAANECYCASLSTQIPKNHVSLVTKENQVFVAGGLFYNEDNKEDPMSAYFLQFDHLDSEWLGMPPLPSPRCLFGLGEALNAIYVVGGRELKDSEDSLDSVLCYDRLSFKWGESDPLPYAVYGHTVLSHMDLVYVIGGKGKDRKCLNKMCVYDPKKFEWKELAPMQTARSLFGATVHDGRIFVAAGVTDTGLTSSSEVYSIADNKWTSFEAFPQERSSLSLVSLAGTLYALGGFATLETESGELVPTELNDIWRYNEDEKKWEGVLREIAYAAGATFLPVRLNVVRLTKM.

The BTB domain occupies 33–98 (LDCVVRVGER…LYTSEIALDE (66 aa)). One can recognise a BACK domain in the interval 133 to 239 (CLAVFRLGLL…PRAFLETRVE (107 aa)). Residues 265 to 298 (LTTLRKKKKEKGEQTARAKEANQGTEDTKAEDDE) form a disordered region. The span at 274 to 284 (EKGEQTARAKE) shows a compositional bias: basic and acidic residues. Kelch repeat units follow at residues 360–412 (QVFV…EALN), 413–462 (AIYV…SHMD), 463–510 (LVYV…VHDG), 512–557 (IFVA…SLAG), and 559–613 (LYAL…PVRL).

Belongs to the KLHL40 family. Component of the BCR(KLHL40) E3 ubiquitin ligase complex, at least composed of CUL3, KLHL40 and RBX1. Interacts with LMOD3. Specifically expressed in skeletal muscles in embryonic, neonatal and adults. Expressed in various types of muscles, including extensor digitorum longus, gastrocnemius, soleus, diaphragm, masseter and heart (at protein level). Not detected in brain, liver and lung (at protein level).

The protein resides in the cytoplasm. The protein localises to the myofibril. Its subcellular location is the sarcomere. It localises to the a band. It is found in the i band. Functionally, substrate-specific adapter of a BCR (BTB-CUL3-RBX1) E3 ubiquitin ligase complex that acts as a key regulator of skeletal muscle development. The BCR(KLHL40) complex acts by mediating ubiquitination and degradation of TFDP1, thereby regulating the activity of the E2F:DP transcription factor complex. Promotes stabilization of LMOD3 by acting as a negative regulator of LMOD3 ubiquitination; the molecular process by which it negatively regulates ubiquitination of LMOD3 is however unclear. This chain is Kelch-like protein 40, found in Mus musculus (Mouse).